A 1390-amino-acid polypeptide reads, in one-letter code: Bromodomain adjacent to zinc finger domain protein 2 (1390 aa).

Disordered stretches follow at residues 30 to 67, 178 to 215, and 235 to 269; these read AKIQKATASSPSKSTNGTSASTSAVPSTSGTSSSQNEA, AKKKPAGVASTSSASTSSSTPSTSSASITSSNNNAANN, and QKQQQQQKDTQKKADQAKKAKELAKQQQKEQDVKN. Residues 35 to 45 are compositionally biased toward polar residues; sequence ATASSPSKSTN. 2 stretches are compositionally biased toward low complexity: residues 46-63 and 186-215; these read GTSASTSAVPSTSGTSSS and ASTSSASTSSSTPSTSSASITSSNNNAANN. Over residues 243–269 the composition is skewed to basic and acidic residues; sequence DTQKKADQAKKAKELAKQQQKEQDVKN. The region spanning 323–395 is the MBD domain; sequence KTNEAMLRLP…DNFLFNTKLV (73 aa). A DDT domain is found at 524-588; that stretch reads SQGFADALMV…LRLALEFPGM (65 aa). The segment covering 705 to 724 has biased composition (basic and acidic residues); sequence KEEQNHESDSEPPTRPDTPK. The tract at residues 705 to 729 is disordered; the sequence is KEEQNHESDSEPPTRPDTPKKATVA. The segment at 1100–1149 adopts a PHD-type zinc-finger fold; the sequence is EALCQICKSMDGDEMLVCDGCESGCHMECFRPRMTKVPEGDWFCQRCREE. The interval 1218–1241 is disordered; sequence EERELEDDNHAENGENTKNGHMNG. The Bromo domain maps to 1273–1377; it reads LPKNMNKELC…KFFQKRWKQL (105 aa).

It belongs to the WAL family. Interacts with set-6. In terms of tissue distribution, broadly expressed in the nervous system, including head, body and tail neurons.

The protein resides in the nucleus. It localises to the chromosome. Functionally, chromatin reader protein, involved in positively modulating the rate of age-related behavioral deterioration. Positively modulates the level of global trimethylated 'Lys-9' of histone H3 (H3K9me3), but not of H3K9me2 or H3K9me1. May repress the expression of mitochondrial function-related genes by occupying their promoter regions, working in concert with histone methyltransferase, set-6. Involved in modulation of the mitochondrial unfolded protein response (UPR). Negatively regulates expression of bas-1, a serotonin (5-HT) and dopamine synthesizing enzyme (DOPA decarboxylase), with aging. Negatively modulates levels of endogenous 5-HT and dopamine with aging. Involved in modulating longevity, probably as a result of enhanced stress resistance via mechanisms related to dietary restriction and mitochondrial function. The polypeptide is Bromodomain adjacent to zinc finger domain protein 2 (Caenorhabditis elegans).